A 227-amino-acid polypeptide reads, in one-letter code: Pro-thyrotropin-releasing hormone-A (227 aa).

The signal sequence occupies residues 1 to 15 (MVSVWWLLLLGTTVS). Gln-75 is subject to Pyrrolidone carboxylic acid. Pro-77 carries the proline amide modification. Residue Gln-89 is modified to Pyrrolidone carboxylic acid. Pro-91 is subject to Proline amide. A Pyrrolidone carboxylic acid modification is found at Gln-107. 2 disordered regions span residues 107–128 (QHPG…KREE) and 151–204 (RRQH…PCEG). Pro-109 is modified (proline amide). Positions 112–128 (RFVDDVEKRQHPGKREE) are enriched in basic and acidic residues. Gln-121 bears the Pyrrolidone carboxylic acid mark. Proline amide is present on Pro-123. At Gln-153 the chain carries Pyrrolidone carboxylic acid. Position 155 is a proline amide (Pro-155). A Pyrrolidone carboxylic acid modification is found at Gln-168. Pro-170 carries the post-translational modification Proline amide. The segment covering 184–201 (ENSKEVGKRQHPGKRYDP) has biased composition (basic and acidic residues). Gln-193 carries the post-translational modification Pyrrolidone carboxylic acid. Residue Pro-195 is modified to Proline amide.

It belongs to the TRH family.

It is found in the secreted. This is Pro-thyrotropin-releasing hormone-A (trh-a) from Xenopus laevis (African clawed frog).